A 258-amino-acid polypeptide reads, in one-letter code: Imidazole glycerol phosphate synthase subunit HisF (258 aa).

Residues Asp-11 and Asp-130 contribute to the active site.

The protein belongs to the HisA/HisF family. Heterodimer of HisH and HisF.

The protein localises to the cytoplasm. It carries out the reaction 5-[(5-phospho-1-deoxy-D-ribulos-1-ylimino)methylamino]-1-(5-phospho-beta-D-ribosyl)imidazole-4-carboxamide + L-glutamine = D-erythro-1-(imidazol-4-yl)glycerol 3-phosphate + 5-amino-1-(5-phospho-beta-D-ribosyl)imidazole-4-carboxamide + L-glutamate + H(+). It participates in amino-acid biosynthesis; L-histidine biosynthesis; L-histidine from 5-phospho-alpha-D-ribose 1-diphosphate: step 5/9. In terms of biological role, IGPS catalyzes the conversion of PRFAR and glutamine to IGP, AICAR and glutamate. The HisF subunit catalyzes the cyclization activity that produces IGP and AICAR from PRFAR using the ammonia provided by the HisH subunit. The protein is Imidazole glycerol phosphate synthase subunit HisF of Baumannia cicadellinicola subsp. Homalodisca coagulata.